Here is a 413-residue protein sequence, read N- to C-terminus: Arginine biosynthesis bifunctional protein ArgJ (413 aa).

Substrate contacts are provided by threonine 158, lysine 184, threonine 195, glutamate 285, asparagine 408, and serine 413. Threonine 195 serves as the catalytic Nucleophile.

Belongs to the ArgJ family. In terms of assembly, heterotetramer of two alpha and two beta chains.

The protein resides in the cytoplasm. The enzyme catalyses N(2)-acetyl-L-ornithine + L-glutamate = N-acetyl-L-glutamate + L-ornithine. It carries out the reaction L-glutamate + acetyl-CoA = N-acetyl-L-glutamate + CoA + H(+). The protein operates within amino-acid biosynthesis; L-arginine biosynthesis; L-ornithine and N-acetyl-L-glutamate from L-glutamate and N(2)-acetyl-L-ornithine (cyclic): step 1/1. Its pathway is amino-acid biosynthesis; L-arginine biosynthesis; N(2)-acetyl-L-ornithine from L-glutamate: step 1/4. Catalyzes two activities which are involved in the cyclic version of arginine biosynthesis: the synthesis of N-acetylglutamate from glutamate and acetyl-CoA as the acetyl donor, and of ornithine by transacetylation between N(2)-acetylornithine and glutamate. This is Arginine biosynthesis bifunctional protein ArgJ from Mesorhizobium japonicum (strain LMG 29417 / CECT 9101 / MAFF 303099) (Mesorhizobium loti (strain MAFF 303099)).